The following is a 287-amino-acid chain: uncharacterized protein (287 aa).

Residues 115 to 287 (PQNFDREWNP…NLAIELLKAI (173 aa)) enclose the ATP-grasp domain. ATP-binding positions include Lys145 and 178–188 (QKYITCSKGES). Residues Asp248, Glu261, and Asn263 each contribute to the Mg(2+) site. The Mn(2+) site is built by Asp248, Glu261, and Asn263.

Belongs to the RimK family.

This is an uncharacterized protein from Mycoplasma genitalium (strain ATCC 33530 / DSM 19775 / NCTC 10195 / G37) (Mycoplasmoides genitalium).